Here is a 736-residue protein sequence, read N- to C-terminus: Na(+)/H(+) antiporter NhaA (736 aa).

Positions 1-387 are na(+)/H(+) antiporter NhaA; it reads MNHSPQSARP…ICGYLLLRAA (387 aa). 11 helical membrane-spanning segments follow: residues 23–43, 58–78, 96–116, 126–146, 155–175, 178–198, 201–221, 265–285, 298–318, 334–354, and 367–387; these read AGGI…NSPF, LSLA…LVGL, MLPG…FAVL, GWAV…SLLG, VFLA…IAIF, AEIS…LFVM, MDVV…FFVF, VAFI…FKGL, ILLG…WLAI, LYGV…IGLL, and IGVL…LRAA. Positions 388-736 are peptidase S49; that stretch reads RPDQSAANPL…EKAIWARYGL (349 aa).

The protein in the N-terminal section; belongs to the NhaA Na(+)/H(+) (TC 2.A.33) antiporter family. In the C-terminal section; belongs to the peptidase S49 family.

Its subcellular location is the cell inner membrane. The catalysed reaction is Na(+)(in) + 2 H(+)(out) = Na(+)(out) + 2 H(+)(in). Its function is as follows. Na(+)/H(+) antiporter that extrudes sodium in exchange for external protons. The chain is Na(+)/H(+) antiporter NhaA from Brucella melitensis biotype 1 (strain ATCC 23456 / CCUG 17765 / NCTC 10094 / 16M).